Consider the following 425-residue polypeptide: NAC domain-containing protein 10 (425 aa).

Residues 1–10 (MESPDSSSGS) show a composition bias toward polar residues. The segment at 1 to 34 (MESPDSSSGSAPPRVLRRQQQQPGSAPELPPGFR) is disordered. Positions 12-23 (PPRVLRRQQQQP) are enriched in low complexity. An NAC domain is found at 29–200 (LPPGFRFHPT…DWVLCRIYKK (172 aa)). A DNA-binding region spans residues 129-206 (VGVKKALVFY…IYKKTNKAGA (78 aa)).

Highest expression in stamens. Expressed in leaves.

The protein localises to the nucleus. In terms of biological role, transcription factor of the NAC family associated with male fertility. Involved in anther development, but not in senescence. Reduced expression of NAC5 via RNAi leads to male-sterility. This is NAC domain-containing protein 10 from Oryza sativa subsp. japonica (Rice).